A 417-amino-acid chain; its full sequence is UPF0761 membrane protein Daci_4966 (417 aa).

6 consecutive transmembrane segments (helical) span residues 49 to 69 (VLALVPFFTVALALFTAFPIF), 106 to 126 (QLGMAGFSILVITAVALILTI), 146 to 166 (VLIYWAAITLGPLVLGLSLVL), 187 to 207 (FIFDSIEYLALAAGMAGLYHY), 235 to 255 (ALGLYLASVPTYSVIYGTFAT), and 256 to 276 (LPILLIWIYMAWIIVLLGAVV).

This sequence belongs to the UPF0761 family.

It localises to the cell inner membrane. The chain is UPF0761 membrane protein Daci_4966 from Delftia acidovorans (strain DSM 14801 / SPH-1).